The sequence spans 150 residues: SsrA-binding protein (150 aa).

A disordered region spans residues 129-150 (ETEKQRDWQREKSRIMKGGSKE).

It belongs to the SmpB family.

The protein localises to the cytoplasm. Its function is as follows. Required for rescue of stalled ribosomes mediated by trans-translation. Binds to transfer-messenger RNA (tmRNA), required for stable association of tmRNA with ribosomes. tmRNA and SmpB together mimic tRNA shape, replacing the anticodon stem-loop with SmpB. tmRNA is encoded by the ssrA gene; the 2 termini fold to resemble tRNA(Ala) and it encodes a 'tag peptide', a short internal open reading frame. During trans-translation Ala-aminoacylated tmRNA acts like a tRNA, entering the A-site of stalled ribosomes, displacing the stalled mRNA. The ribosome then switches to translate the ORF on the tmRNA; the nascent peptide is terminated with the 'tag peptide' encoded by the tmRNA and targeted for degradation. The ribosome is freed to recommence translation, which seems to be the essential function of trans-translation. The polypeptide is SsrA-binding protein (Cupriavidus pinatubonensis (strain JMP 134 / LMG 1197) (Cupriavidus necator (strain JMP 134))).